A 245-amino-acid chain; its full sequence is DNA polymerase sliding clamp 2 (245 aa).

Belongs to the PCNA family. Forms homodimers with PCNA1, which then recruit PCNA3; does not form homotrimers. The heterodimers interact with RfcS homotetramers. Heterotrimer which circularizes head-to-tail (head is at N-terminus, tail is at C-terminus) to form a toroid; DNA passes through its center. Replication factor C (RFC) is required to load the toroid on the DNA. This subunit interacts with DNA polymerase I (dpo1). The heterotrimer also interacts with flap endonuclease 1, DNA ligase and XPF via the other subunits.

In terms of biological role, one of the sliding clamp subunits that acts as a moving platform for DNA processing. Responsible for tethering the catalytic subunit of DNA polymerase to DNA during high-speed replication. Heterotrimer stimulates the Holliday junction resolvase Hjc. DNA polymerase I, DNA ligase and the flap endonuclease may be constitutively associated with the PCNA heterotrimer forming a scanning complex able to couple DNA synthesis and Okazaki fragment maturation. The sequence is that of DNA polymerase sliding clamp 2 from Saccharolobus solfataricus (strain ATCC 35092 / DSM 1617 / JCM 11322 / P2) (Sulfolobus solfataricus).